The following is a 138-amino-acid chain: Transcription antitermination protein NusB (138 aa).

This sequence belongs to the NusB family.

Involved in transcription antitermination. Required for transcription of ribosomal RNA (rRNA) genes. Binds specifically to the boxA antiterminator sequence of the ribosomal RNA (rrn) operons. In Serratia proteamaculans (strain 568), this protein is Transcription antitermination protein NusB.